The chain runs to 334 residues: Methionine import ATP-binding protein MetN (334 aa).

Residues 7-246 form the ABC transporter domain; it reads VEFRSVSKVF…PRSAPARAFV (240 aa). An ATP-binding site is contributed by 43 to 50; sequence GYSGAGKS.

The protein belongs to the ABC transporter superfamily. Methionine importer (TC 3.A.1.24) family. As to quaternary structure, the complex is composed of two ATP-binding proteins (MetN), two transmembrane proteins (MetI) and a solute-binding protein (MetQ).

It is found in the cell membrane. It carries out the reaction L-methionine(out) + ATP + H2O = L-methionine(in) + ADP + phosphate + H(+). The enzyme catalyses D-methionine(out) + ATP + H2O = D-methionine(in) + ADP + phosphate + H(+). Its function is as follows. Part of the ABC transporter complex MetNIQ involved in methionine import. Responsible for energy coupling to the transport system. In Nocardia farcinica (strain IFM 10152), this protein is Methionine import ATP-binding protein MetN.